The primary structure comprises 1255 residues: ATP-binding cassette sub-family B member 5 (1255 aa).

The chain crosses the membrane as a helical span at residues 46–66 (IVLMTLGILASMINGATVPLM). Positions 51–351 (LGILASMING…SVAPHLETFT (301 aa)) constitute an ABC transmembrane type-1 1 domain. N-linked (GlcNAc...) asparagine glycans are attached at residues asparagine 86 and asparagine 92. A helical membrane pass occupies residues 104-124 (IIVLTLYYIGIGAAALIFGYV). Asparagine 189 carries N-linked (GlcNAc...) asparagine glycosylation. The next 2 membrane-spanning stretches (helical) occupy residues 290–310 (LSLGAVYFFMNGAYGLAFWYG) and 314–334 (IFGGEPGYTIGTILAVFFSVI). Asparagine 372 and asparagine 391 each carry an N-linked (GlcNAc...) asparagine glycan. One can recognise an ABC transporter 1 domain in the interval 387–623 (IEFKNVSFSY…QGLYYSLAMA (237 aa)). An ATP-binding site is contributed by 422–429 (GPSGSGKS). N-linked (GlcNAc...) asparagine glycosylation is present at asparagine 643. A run of 2 helical transmembrane segments spans residues 694-714 (VLGTLASALNGSVHPVFSIIF) and 738-758 (MMLVVLGIVALVTYLMQGLFY). The ABC transmembrane type-1 2 domain occupies 694–981 (VLGTLASALN…TLVWAPEYSK (288 aa)). Asparagine 790 is a glycosylation site (N-linked (GlcNAc...) asparagine). 3 consecutive transmembrane segments (helical) span residues 814–836 (LGIVTQDVSNMSLSILISFIYGW), 841–863 (LILSFAPVLAVTGMIQTAAMAGF), and 955–975 (MFIVFTAIAYGAMAIGETLVW). An ABC transporter 2 domain is found at 1016 to 1254 (LEFREVSFVY…GDTYFKLVAA (239 aa)). Asparagine 1036 carries an N-linked (GlcNAc...) asparagine glycan. 1051-1058 (GSSGCGKS) provides a ligand contact to ATP. N-linked (GlcNAc...) asparagine glycosylation is found at asparagine 1105, asparagine 1189, and asparagine 1229.

This sequence belongs to the ABC transporter superfamily. ABCB family. Multidrug resistance exporter (TC 3.A.1.201) subfamily. In terms of tissue distribution, in developing eye, expressed in basal limbal epithelium but not in central cornea. Acts as a marker of limbal stem cells.

The protein localises to the cell membrane. The catalysed reaction is daunorubicin(in) + ATP + H2O = daunorubicin(out) + ADP + phosphate + H(+). Its function is as follows. Energy-dependent efflux transporter responsible for decreased drug accumulation in multidrug-resistant cells. Specifically present in limbal stem cells, where it plays a key role in corneal development and repair. The chain is ATP-binding cassette sub-family B member 5 from Mus musculus (Mouse).